The chain runs to 129 residues: Large ribosomal subunit protein bL17 (129 aa).

This sequence belongs to the bacterial ribosomal protein bL17 family. Part of the 50S ribosomal subunit. Contacts protein L32.

The polypeptide is Large ribosomal subunit protein bL17 (Yersinia pseudotuberculosis serotype O:1b (strain IP 31758)).